The sequence spans 854 residues: Rod cGMP-specific 3',5'-cyclic phosphodiesterase subunit beta (854 aa).

Ser2 is subject to N-acetylserine. GAF domains are found at residues 71 to 220 and 252 to 429; these read NMER…TLYL and DIER…GWSV. Positions 481–814 constitute a PDEase domain; sequence DEDELGEILK…KEWKALADEY (334 aa). Residue His557 is the Proton donor of the active site. Residues His561, His597, Asp598, and Asp718 each contribute to the a divalent metal cation site. Cys851 is lipidated: S-geranylgeranyl cysteine. Positions 852 to 854 are cleaved as a propeptide — removed in mature form; that stretch reads CIL.

Belongs to the cyclic nucleotide phosphodiesterase family. In terms of assembly, oligomer composed of two catalytic chains (alpha and beta), an inhibitory chain (gamma) and the delta chain. A divalent metal cation serves as cofactor.

The protein localises to the membrane. Its subcellular location is the cell projection. It is found in the cilium. The protein resides in the photoreceptor outer segment. It carries out the reaction 3',5'-cyclic GMP + H2O = GMP + H(+). Rod-specific cGMP phosphodiesterase that catalyzes the hydrolysis of 3',5'-cyclic GMP. Necessary for the formation of a functional phosphodiesterase holoenzyme. Involved in retinal circadian rhythm photoentrainment via modulation of UVA and orange light-induced phase-shift of the retina clock. May participate in processes of transmission and amplification of the visual signal. This is Rod cGMP-specific 3',5'-cyclic phosphodiesterase subunit beta from Homo sapiens (Human).